Consider the following 339-residue polypeptide: MIIFFEIWHWSWALLGCYLNLLLTYLAIFRSPKAIKSYATLIINFAATDFVECALDLFIQTRLVAVPGEAKLVYIFNGPCKYTGSLSCKVGLSFLLHCLTHSVWSLLISFGYRFYILHNPALSRLTLLKITIMFYIPSLVQALTYWTLFVPREKILPLAKQWFPYYDLETETGVLTGVIDLTNFVAVYAVAHICLPFFPVYITIFVLRQKIMKYLGGQSQMMSQDTKAAHTQLLRALTTQAIIPMFLGIAVLLYFSSQSGLLKSPILEYSIFSVAILMPALSPITYLYFVRPYRQKVKRIIRHPFKLLSRPHERATSNSGVFYSGDHPTHFSKPVIAVH.

7 consecutive transmembrane segments (helical) span residues 2–22 (IIFF…LNLL), 39–59 (ATLI…DLFI), 90–110 (VGLS…LISF), 130–150 (ITIM…TLFV), 187–207 (VYAV…IFVL), 242–262 (IIPM…SGLL), and 270–290 (SIFS…LYFV).

The protein belongs to the nematode receptor-like protein srd family.

The protein resides in the membrane. This Caenorhabditis elegans protein is Serpentine receptor class delta-19 (srd-19).